Consider the following 82-residue polypeptide: RNA-binding protein KhpA (82 aa).

One can recognise a KH domain in the interval 35 to 82; that stretch reads STILELRVSQSDVGKIIGRRGRIARAIRTLLGACAAKTNRRVQLEILD.

This sequence belongs to the KhpA RNA-binding protein family. In terms of assembly, forms a complex with KhpB.

The protein resides in the cytoplasm. Its function is as follows. A probable RNA chaperone. Forms a complex with KhpB which binds to cellular RNA and controls its expression. Plays a role in peptidoglycan (PG) homeostasis and cell length regulation. The protein is RNA-binding protein KhpA of Borreliella burgdorferi (strain ATCC 35210 / DSM 4680 / CIP 102532 / B31) (Borrelia burgdorferi).